A 185-amino-acid polypeptide reads, in one-letter code: Histone H1-delta (185 aa).

2 disordered regions span residues 1–37 (MADTDAAPAAPAPSTPKKAAKKKASKPKTPASHPKYS) and 90–185 (RHVK…GKKK). One can recognise an H15 domain in the interval 32–105 (SHPKYSDMIA…GASGSFLLAE (74 aa)). Residues 109–185 (TPKKAAAKKA…KAAKGKGKKK (77 aa)) show a composition bias toward basic residues.

It belongs to the histone H1/H5 family.

It is found in the nucleus. Its subcellular location is the chromosome. Histones H1 are necessary for the condensation of nucleosome chains into higher-order structures. The polypeptide is Histone H1-delta (Strongylocentrotus purpuratus (Purple sea urchin)).